The chain runs to 179 residues: Ribosome maturation factor RimM (179 aa).

The region spanning 98-170 (PDEFWDRRLR…RIVVSGIPGL (73 aa)) is the PRC barrel domain.

It belongs to the RimM family. Binds ribosomal protein uS19.

It localises to the cytoplasm. In terms of biological role, an accessory protein needed during the final step in the assembly of 30S ribosomal subunit, possibly for assembly of the head region. Essential for efficient processing of 16S rRNA. May be needed both before and after RbfA during the maturation of 16S rRNA. It has affinity for free ribosomal 30S subunits but not for 70S ribosomes. The protein is Ribosome maturation factor RimM of Cutibacterium acnes (strain DSM 16379 / KPA171202) (Propionibacterium acnes).